The primary structure comprises 780 residues: ATP-dependent DNA helicase RecG (780 aa).

3 domain regions span residues 1-350, 351-549, and 550-780; these read MLCS…GGIP, KKIE…EMPP, and GRKE…IEVG. The segment at 154–252 is wedge domain; the sequence is RKIFKLNDLL…VTPKEGEYVR (99 aa). The ATP site is built by phenylalanine 367, leucine 369, glycine 399, serine 400, glycine 401, lysine 402, threonine 403, and arginine 436. The Helicase ATP-binding domain maps to 383–544; sequence DMISEKPMNR…FYGDLDVTVI (162 aa). A DEAH box motif is present at residues 497–500; it reads DEQH. The Helicase C-terminal domain occupies 563–728; that stretch reads RVNEVYEFVR…EYDLKTRGPG (166 aa).

It belongs to the helicase family. RecG subfamily. Monomer.

It carries out the reaction Couples ATP hydrolysis with the unwinding of duplex DNA by translocating in the 3'-5' direction.. The enzyme catalyses ATP + H2O = ADP + phosphate + H(+). Plays a critical role in recombination and DNA repair. Helps process Holliday junction intermediates to mature products by catalyzing branch migration. Has replication fork (Y-DNA) regression activity, unwinds stalled or blocked replication forks to make a HJ that can be resolved. Has a DNA unwinding activity characteristic of a DNA helicase with 3'-5' polarity. Might be a DNA translocase rather than a bona fide helicase. The protein is ATP-dependent DNA helicase RecG of Thermotoga maritima (strain ATCC 43589 / DSM 3109 / JCM 10099 / NBRC 100826 / MSB8).